Consider the following 294-residue polypeptide: Cytidine deaminase (294 aa).

2 CMP/dCMP-type deaminase domains span residues 48 to 168 (DEDA…FGPK) and 186 to 294 (LTGD…VLLA). 89–91 (NME) contacts substrate. Histidine 102 is a Zn(2+) binding site. Residue glutamate 104 is the Proton donor of the active site. Zn(2+) contacts are provided by cysteine 129 and cysteine 132.

The protein belongs to the cytidine and deoxycytidylate deaminase family. As to quaternary structure, homodimer. The cofactor is Zn(2+).

It catalyses the reaction cytidine + H2O + H(+) = uridine + NH4(+). The catalysed reaction is 2'-deoxycytidine + H2O + H(+) = 2'-deoxyuridine + NH4(+). Its function is as follows. This enzyme scavenges exogenous and endogenous cytidine and 2'-deoxycytidine for UMP synthesis. The protein is Cytidine deaminase of Escherichia coli O157:H7.